Reading from the N-terminus, the 179-residue chain is UPF0227 protein Sbal195_2522 (179 aa).

This sequence belongs to the UPF0227 family.

The polypeptide is UPF0227 protein Sbal195_2522 (Shewanella baltica (strain OS195)).